We begin with the raw amino-acid sequence, 313 residues long: Foldase protein PrsA (313 aa).

A signal peptide spans 1-20 (MKKKLLAGAITLLSVATLAA). The N-palmitoyl cysteine moiety is linked to residue C21. A lipid anchor (S-diacylglycerol cysteine) is attached at C21. The PpiC domain maps to 143–241 (TPDVTAQIIR…SQYYIVKLTK (99 aa)).

This sequence belongs to the PrsA family.

Its subcellular location is the cell membrane. The enzyme catalyses [protein]-peptidylproline (omega=180) = [protein]-peptidylproline (omega=0). Plays a major role in protein secretion by helping the post-translocational extracellular folding of several secreted proteins. The protein is Foldase protein PrsA of Streptococcus pneumoniae (strain ATCC BAA-255 / R6).